The following is a 166-amino-acid chain: Ribonuclease H (166 aa).

The RNase H type-1 domain occupies 5 to 147 (PRKRVALFTD…VDREARRQAQ (143 aa)). The Mg(2+) site is built by Asp14, Glu52, Asp74, and Asp139. The tract at residues 128-166 (GHTGHPENERVDREARRQAQSQAKTPCPPRAPTLFHEEA) is disordered. Positions 131–144 (GHPENERVDREARR) are enriched in basic and acidic residues.

The protein belongs to the RNase H family. Monomer. It depends on Mg(2+) as a cofactor.

It carries out the reaction Endonucleolytic cleavage to 5'-phosphomonoester.. Functionally, endonuclease that specifically degrades the RNA of RNA-DNA hybrids. In Thermus thermophilus (strain ATCC 27634 / DSM 579 / HB8), this protein is Ribonuclease H (rnhA).